Here is a 248-residue protein sequence, read N- to C-terminus: DNA repair protein RecO (248 aa).

The protein belongs to the RecO family.

Functionally, involved in DNA repair and RecF pathway recombination. The chain is DNA repair protein RecO from Bacillus cytotoxicus (strain DSM 22905 / CIP 110041 / 391-98 / NVH 391-98).